Here is a 704-residue protein sequence, read N- to C-terminus: DNA-directed DNA polymerase (704 aa).

A 3'-5'exonuclease region spans residues 1–187 (MIVSDIEANA…TKALLEKLLS (187 aa)). Residues aspartate 5, glutamate 7, and aspartate 174 each contribute to the Mg(2+) site. The tract at residues 202 to 704 (GYTTFWSESL…KMGPNWAICH (503 aa)) is polymerase. The interval 262–338 (GSWYQPKGGT…VEHVVFNPSS (77 aa)) is binding to host TrxA. 2 residues coordinate Mg(2+): aspartate 475 and alanine 476. Residues histidine 506, arginine 518, lysine 522, and tyrosine 526 each coordinate substrate. Mg(2+) is bound at residue aspartate 654.

It belongs to the DNA polymerase type-A family. Composed of two subunits. One is encoded by the phage and the other is encoded by the host thioredoxin. Interacts with DNA primase/helicase; this interaction is essential for the coordination of DNA unwinding and nucleotide polymerization on duplex DNA. Interacts with the ssDNA-binding protein. Part of the replicase complex that includes the DNA polymerase, thioredoxin, the primase/helicase and the single-stranded DNA binding protein. Mg(2+) serves as cofactor.

The catalysed reaction is DNA(n) + a 2'-deoxyribonucleoside 5'-triphosphate = DNA(n+1) + diphosphate. Its function is as follows. Replicates viral genomic DNA. This polymerase possesses two enzymatic activities: DNA synthesis (polymerase) and an exonucleolytic activity that degrades single-stranded DNA in the 3'-5' direction. Non-processive DNA polymerase that achieves processivity by binding to host thioredoxin (TrxA). This interaction increases the rate of dNTP incorporation to yield a processivity of approximately 800 nucleotides (nt) per binding event. Interacts with DNA helicase gp4 to coordinate nucleotide polymerization with unwinding of the DNA. The leading strand is synthesized continuously while synthesis of the lagging strand requires the synthesis of oligoribonucleotides by the primase domain of gp4. This Escherichia phage T7 (Bacteriophage T7) protein is DNA-directed DNA polymerase.